The following is a 204-amino-acid chain: MTENQQLKALLSACHWIGEKGWCPATGGNMSLRLDDQHCLVTESGKDKGSLTETDFLLVETASNHVPSGRTPSAETGLHTLIYRLYPQIGAVLHTHSVNATVLSRVERSDGLVLQGYEMQKSLGGQTTHLDSVVIPIFDNDQDISRLAARVAAHAEATPLQYGFLVRGHGLYCWGRQVAEARRHLEGLEFLFQCELQRRLLEAK.

Zn(2+) is bound by residues H94 and H96.

The protein belongs to the aldolase class II family. MtnB subfamily. Zn(2+) is required as a cofactor.

The enzyme catalyses 5-(methylsulfanyl)-D-ribulose 1-phosphate = 5-methylsulfanyl-2,3-dioxopentyl phosphate + H2O. The protein operates within amino-acid biosynthesis; L-methionine biosynthesis via salvage pathway; L-methionine from S-methyl-5-thio-alpha-D-ribose 1-phosphate: step 2/6. Its function is as follows. Catalyzes the dehydration of methylthioribulose-1-phosphate (MTRu-1-P) into 2,3-diketo-5-methylthiopentyl-1-phosphate (DK-MTP-1-P). This is Methylthioribulose-1-phosphate dehydratase from Serratia proteamaculans (strain 568).